Consider the following 460-residue polypeptide: Ribosomal protein uS12 methylthiotransferase RimO (460 aa).

Positions 16–130 constitute an MTTase N-terminal domain; it reads NKIHFISLGC…ILSAIESKEY (115 aa). [4Fe-4S] cluster-binding residues include Cys25, Cys61, Cys93, Cys164, Cys168, and Cys171. Residues 150–382 form the Radical SAM core domain; it reads STPKHYAYLK…SQAQKQNVEK (233 aa). The TRAM domain maps to 385 to 455; it reads QKLVGQVVEA…GYDLIGRVVK (71 aa).

The protein belongs to the methylthiotransferase family. RimO subfamily. It depends on [4Fe-4S] cluster as a cofactor.

It localises to the cytoplasm. It carries out the reaction L-aspartate(89)-[ribosomal protein uS12]-hydrogen + (sulfur carrier)-SH + AH2 + 2 S-adenosyl-L-methionine = 3-methylsulfanyl-L-aspartate(89)-[ribosomal protein uS12]-hydrogen + (sulfur carrier)-H + 5'-deoxyadenosine + L-methionine + A + S-adenosyl-L-homocysteine + 2 H(+). Catalyzes the methylthiolation of an aspartic acid residue of ribosomal protein uS12. This is Ribosomal protein uS12 methylthiotransferase RimO from Chlamydia felis (strain Fe/C-56) (Chlamydophila felis).